A 158-amino-acid polypeptide reads, in one-letter code: Snaclec convulxin subunit alpha (158 aa).

The N-terminal stretch at 1–23 (MGRFIFVSFGLLVLFLSLSGTGA) is a signal peptide. Cystine bridges form between C27–C38, C55–C152, and C127–C144. The region spanning 34–158 (YDQHCYRIFN…PFVCKFPPQC (125 aa)) is the C-type lectin domain.

The protein belongs to the snaclec family. As to quaternary structure, tetramer of heterodimers of alpha and beta subunits (alphabeta)(4); disulfide-linked. As to expression, expressed by the venom gland.

It is found in the secreted. Functionally, snake venom lectin that activates platelets by binding to the platelet collagen receptor glycoprotein VI (GP6). The indirect activation of integrin alpha-IIb/beta-3 (ITGA2B/ITGB3) also induced by the toxin is upstream the cytoskeletal translocation of GPIb, FcRgamma (FCER1G) and 14-3-3zeta (YWHAZ). The sequence is that of Snaclec convulxin subunit alpha from Crotalus durissus terrificus (South American rattlesnake).